Here is a 251-residue protein sequence, read N- to C-terminus: Triosephosphate isomerase (251 aa).

9 to 11 is a substrate binding site; the sequence is NWK. His-95 (electrophile) is an active-site residue. Glu-167 acts as the Proton acceptor in catalysis. Residues Gly-173, Ser-213, and 234–235 contribute to the substrate site; that span reads GG.

Belongs to the triosephosphate isomerase family. In terms of assembly, homodimer.

It is found in the cytoplasm. It carries out the reaction D-glyceraldehyde 3-phosphate = dihydroxyacetone phosphate. It participates in carbohydrate biosynthesis; gluconeogenesis. Its pathway is carbohydrate degradation; glycolysis; D-glyceraldehyde 3-phosphate from glycerone phosphate: step 1/1. Involved in the gluconeogenesis. Catalyzes stereospecifically the conversion of dihydroxyacetone phosphate (DHAP) to D-glyceraldehyde-3-phosphate (G3P). The chain is Triosephosphate isomerase from Lactobacillus gasseri (strain ATCC 33323 / DSM 20243 / BCRC 14619 / CIP 102991 / JCM 1131 / KCTC 3163 / NCIMB 11718 / NCTC 13722 / AM63).